The sequence spans 396 residues: 1-deoxy-D-xylulose 5-phosphate reductoisomerase (396 aa).

NADPH-binding residues include T10, G11, S12, I13, N38, and N123. K124 contributes to the 1-deoxy-D-xylulose 5-phosphate binding site. E125 is an NADPH binding site. D149 is a binding site for Mn(2+). Positions 150, 151, 185, and 208 each coordinate 1-deoxy-D-xylulose 5-phosphate. Position 151 (E151) interacts with Mn(2+). Residue G214 coordinates NADPH. 1-deoxy-D-xylulose 5-phosphate contacts are provided by S221, N226, K227, and E230. E230 contributes to the Mn(2+) binding site.

This sequence belongs to the DXR family. Requires Mg(2+) as cofactor. Mn(2+) serves as cofactor.

The catalysed reaction is 2-C-methyl-D-erythritol 4-phosphate + NADP(+) = 1-deoxy-D-xylulose 5-phosphate + NADPH + H(+). It functions in the pathway isoprenoid biosynthesis; isopentenyl diphosphate biosynthesis via DXP pathway; isopentenyl diphosphate from 1-deoxy-D-xylulose 5-phosphate: step 1/6. Its function is as follows. Catalyzes the NADPH-dependent rearrangement and reduction of 1-deoxy-D-xylulose-5-phosphate (DXP) to 2-C-methyl-D-erythritol 4-phosphate (MEP). This Shewanella halifaxensis (strain HAW-EB4) protein is 1-deoxy-D-xylulose 5-phosphate reductoisomerase.